The sequence spans 459 residues: UNC93-like protein 1 (459 aa).

Residues 1 to 26 (MNVRDEGKTTAEKHGGGEENKSPENK) are disordered. 11 helical membrane-spanning segments follow: residues 38–58 (LMGF…GMGG), 73–93 (AVYT…NVLG), 96–116 (LTLA…LYYN), 122–142 (AFAI…WAGE), 159–179 (IALF…IPFI), 195–215 (YIAF…ILPA), 251–271 (LLIV…FNNV), 287–307 (FYWG…DFSF), 314–334 (GFTG…GGLA), 355–375 (GIEF…DAMY), and 425–445 (LIVN…LVYF).

It belongs to the unc-93 family.

It localises to the membrane. The sequence is that of UNC93-like protein 1 from Arabidopsis thaliana (Mouse-ear cress).